Here is a 239-residue protein sequence, read N- to C-terminus: Transmembrane emp24 domain-containing protein 6 (239 aa).

Positions 1-21 (MFPLLLVAELVVLSLVTSVKS) are cleaved as a signal peptide. Residues 22-200 (QETDPLHGSK…FFLLQSNYTY (179 aa)) lie on the Lumenal side of the membrane. In terms of domain architecture, GOLD spans 53–138 (IECFWQFADQ…SIQVYLNFGV (86 aa)). 2 N-linked (GlcNAc...) asparagine glycosylation sites follow: N156 and N197. The chain crosses the membrane as a helical span at residues 201-223 (VNWWSTAQSLAIVLSGALQLYFL). Residues 224 to 239 (KRLFTASTTDTKKPRC) are Cytoplasmic-facing.

This sequence belongs to the EMP24/GP25L family.

The protein resides in the endoplasmic reticulum membrane. In Mus musculus (Mouse), this protein is Transmembrane emp24 domain-containing protein 6 (Tmed6).